The primary structure comprises 241 residues: Beta-casein (241 aa).

A signal peptide spans 1-15 (MKILILACLVALALA). The interval 21–45 (LNVSSETVESLSSNEPDSSSEESIT) is disordered. S24 is modified (phosphoserine; in form 4-P, form 5-P, form 6-P and form 7-P). The residue at position 25 (S25) is a Phosphoserine; in form 7-P. Phosphothreonine; in form 6-P and form 7-P is present on T27. Residues S30 and S32 each carry the phosphoserine modification. S33 is subject to Phosphoserine; in form 5-P, form 6-P and form 7-P. Phosphoserine; in form 4-P, form 5-P, form 6-P and form 7-P is present on residues S38, S39, and S40. At N150 the chain carries Deamidated asparagine.

It belongs to the beta-casein family. Post-translationally, there are at least five different forms found in milk, with varying degrees of phosphorylation. These include form 3-P which is phosphorylated at three sites that have not been determined, this form is present in very low amounts, form 4-P which is phosphorylated at four sites, form 5-P which is phosphorylated at five sites, form 6-P which is phosphorylated at six sites, and form 7-P which is phosphorylated at seven sites. In terms of processing, spontaneous deamidation of Asn-150 produces aspartate or isoaspartate. As to expression, mammary gland specific. Secreted in milk.

The protein resides in the secreted. Functionally, important role in determination of the surface properties of the casein micelles. The sequence is that of Beta-casein from Equus caballus (Horse).